The primary structure comprises 256 residues: uncharacterized protein (256 aa).

Helical transmembrane passes span Thr-6–Leu-26, Leu-29–Ile-49, Ile-61–Phe-81, Ile-145–Ala-165, Tyr-175–Ile-195, and Ile-218–Phe-238.

Belongs to the DedA family.

The protein resides in the cell membrane. This is an uncharacterized protein from Buchnera aphidicola subsp. Acyrthosiphon pisum (strain APS) (Acyrthosiphon pisum symbiotic bacterium).